A 557-amino-acid chain; its full sequence is Dihydroxy-acid dehydratase (557 aa).

Cysteine 49 lines the [2Fe-2S] cluster pocket. Aspartate 81 is a binding site for Mg(2+). A [2Fe-2S] cluster-binding site is contributed by cysteine 122. Mg(2+) is bound by residues aspartate 123 and lysine 124. The residue at position 124 (lysine 124) is an N6-carboxylysine. Cysteine 194 lines the [2Fe-2S] cluster pocket. Glutamate 446 provides a ligand contact to Mg(2+). The active-site Proton acceptor is the serine 472.

It belongs to the IlvD/Edd family. In terms of assembly, homodimer. It depends on [2Fe-2S] cluster as a cofactor. Requires Mg(2+) as cofactor.

The catalysed reaction is (2R)-2,3-dihydroxy-3-methylbutanoate = 3-methyl-2-oxobutanoate + H2O. It carries out the reaction (2R,3R)-2,3-dihydroxy-3-methylpentanoate = (S)-3-methyl-2-oxopentanoate + H2O. It functions in the pathway amino-acid biosynthesis; L-isoleucine biosynthesis; L-isoleucine from 2-oxobutanoate: step 3/4. The protein operates within amino-acid biosynthesis; L-valine biosynthesis; L-valine from pyruvate: step 3/4. Functions in the biosynthesis of branched-chain amino acids. Catalyzes the dehydration of (2R,3R)-2,3-dihydroxy-3-methylpentanoate (2,3-dihydroxy-3-methylvalerate) into 2-oxo-3-methylpentanoate (2-oxo-3-methylvalerate) and of (2R)-2,3-dihydroxy-3-methylbutanoate (2,3-dihydroxyisovalerate) into 2-oxo-3-methylbutanoate (2-oxoisovalerate), the penultimate precursor to L-isoleucine and L-valine, respectively. In Prochlorococcus marinus (strain MIT 9215), this protein is Dihydroxy-acid dehydratase.